Reading from the N-terminus, the 721-residue chain is 1,4-alpha-glucan branching enzyme GlgB (721 aa).

D400 functions as the Nucleophile in the catalytic mechanism. E453 functions as the Proton donor in the catalytic mechanism.

This sequence belongs to the glycosyl hydrolase 13 family. GlgB subfamily. Monomer.

It catalyses the reaction Transfers a segment of a (1-&gt;4)-alpha-D-glucan chain to a primary hydroxy group in a similar glucan chain.. The protein operates within glycan biosynthesis; glycogen biosynthesis. Catalyzes the formation of the alpha-1,6-glucosidic linkages in glycogen by scission of a 1,4-alpha-linked oligosaccharide from growing alpha-1,4-glucan chains and the subsequent attachment of the oligosaccharide to the alpha-1,6 position. The protein is 1,4-alpha-glucan branching enzyme GlgB of Chlamydia abortus (strain DSM 27085 / S26/3) (Chlamydophila abortus).